A 488-amino-acid polypeptide reads, in one-letter code: Cysteine--tRNA ligase (488 aa).

Position 40 (Cys40) interacts with Zn(2+). The short motif at Met42–His52 is the 'HIGH' region element. Zn(2+) contacts are provided by Cys221, His246, and Glu250. Residues Lys278–Ser282 carry the 'KMSKS' region motif. ATP is bound at residue Lys281.

Belongs to the class-I aminoacyl-tRNA synthetase family. In terms of assembly, monomer. The cofactor is Zn(2+).

The protein resides in the cytoplasm. The catalysed reaction is tRNA(Cys) + L-cysteine + ATP = L-cysteinyl-tRNA(Cys) + AMP + diphosphate. This Psychrobacter cryohalolentis (strain ATCC BAA-1226 / DSM 17306 / VKM B-2378 / K5) protein is Cysteine--tRNA ligase.